The following is a 226-amino-acid chain: Ribonuclease 3 (226 aa).

The RNase III domain occupies 6–128; the sequence is INRLQRKLGY…LIGGVFLDSD (123 aa). E41 contributes to the Mg(2+) binding site. D45 is a catalytic residue. Mg(2+)-binding residues include D114 and E117. E117 is a catalytic residue. In terms of domain architecture, DRBM spans 155 to 225; that stretch reads DPKTRLQEYL…AEQALKMLEL (71 aa).

The protein belongs to the ribonuclease III family. As to quaternary structure, homodimer. Mg(2+) is required as a cofactor.

Its subcellular location is the cytoplasm. It carries out the reaction Endonucleolytic cleavage to 5'-phosphomonoester.. Digests double-stranded RNA. Involved in the processing of primary rRNA transcript to yield the immediate precursors to the large and small rRNAs (23S and 16S). Processes some mRNAs, and tRNAs when they are encoded in the rRNA operon. Processes pre-crRNA and tracrRNA of type II CRISPR loci if present in the organism. This is Ribonuclease 3 from Enterobacter sp. (strain 638).